The following is a 296-amino-acid chain: MYFQDIISTLNRFWADQGCLLLQPYDTEKGAGTMSPHTVLRAIGPEPWAVAYPEPCRRPTDGRYGDNPNRAQHYFQYQVLIKPSPDGIQETYLASLEALGIKAADHDIRFVEDNWESPTLGAWGVGWEVWLDGMEVTQFTYFQQCGGIDCKPVSIEITYGLERLAMYLQDVESIWDLSWNSERSYGEIWLPFEKGQCHFNFEASNPERLKQLFAIYEAEAADLIEKQLPAPALDFVLKCSHTFNLLEARGVISVTERTATIVRIRNLARKVAEAWLAEREALGFPLLKGGTLETAA.

It belongs to the class-II aminoacyl-tRNA synthetase family. As to quaternary structure, tetramer of two alpha and two beta subunits.

It localises to the cytoplasm. It catalyses the reaction tRNA(Gly) + glycine + ATP = glycyl-tRNA(Gly) + AMP + diphosphate. In Synechococcus sp. (strain CC9605), this protein is Glycine--tRNA ligase alpha subunit.